A 76-amino-acid chain; its full sequence is 8.4 kDa cro protein (76 aa).

This Escherichia coli (Bacteriophage HK022) protein is 8.4 kDa cro protein (cro-HTT).